A 1093-amino-acid chain; its full sequence is Protein translocase subunit SecA (1093 aa).

Residues Gln-84, 102 to 106 (GEGKT), and Asp-491 contribute to the ATP site. Disordered regions lie at residues 837–869 (QNLQ…SEHE) and 904–1062 (SELE…TSEA). Composition is skewed to basic and acidic residues over residues 904–937 (SELE…DATK), 944–971 (EELK…EKLK), and 978–1062 (PKDL…TSEA).

Belongs to the SecA family. Monomer and homodimer. Part of the essential Sec protein translocation apparatus which comprises SecA, SecYEG and auxiliary proteins SecDF. Other proteins may also be involved.

Its subcellular location is the cell membrane. It localises to the cytoplasm. It catalyses the reaction ATP + H2O + cellular proteinSide 1 = ADP + phosphate + cellular proteinSide 2.. Functionally, part of the Sec protein translocase complex. Interacts with the SecYEG preprotein conducting channel. Has a central role in coupling the hydrolysis of ATP to the transfer of proteins into and across the cell membrane, serving as an ATP-driven molecular motor driving the stepwise translocation of polypeptide chains across the membrane. The sequence is that of Protein translocase subunit SecA from Mycoplasmopsis synoviae (strain 53) (Mycoplasma synoviae).